We begin with the raw amino-acid sequence, 580 residues long: Dihydroxy-acid dehydratase (580 aa).

The tract at residues 1-31 (MPSGSSESPADALRASDSTPDIKPRSRDVTD) is disordered. A compositionally biased stretch (basic and acidic residues) spans 20 to 31 (PDIKPRSRDVTD). Residue Cys69 coordinates [2Fe-2S] cluster. Mg(2+) is bound at residue Asp101. Cys142 serves as a coordination point for [2Fe-2S] cluster. The Mg(2+) site is built by Asp143 and Lys144. Lys144 carries the post-translational modification N6-carboxylysine. Cys219 provides a ligand contact to [2Fe-2S] cluster. Glu470 provides a ligand contact to Mg(2+). The Proton acceptor role is filled by Ser496.

It belongs to the IlvD/Edd family. As to quaternary structure, homodimer. Requires [2Fe-2S] cluster as cofactor. The cofactor is Mg(2+).

The enzyme catalyses (2R)-2,3-dihydroxy-3-methylbutanoate = 3-methyl-2-oxobutanoate + H2O. It carries out the reaction (2R,3R)-2,3-dihydroxy-3-methylpentanoate = (S)-3-methyl-2-oxopentanoate + H2O. It participates in amino-acid biosynthesis; L-isoleucine biosynthesis; L-isoleucine from 2-oxobutanoate: step 3/4. It functions in the pathway amino-acid biosynthesis; L-valine biosynthesis; L-valine from pyruvate: step 3/4. In terms of biological role, functions in the biosynthesis of branched-chain amino acids. Catalyzes the dehydration of (2R,3R)-2,3-dihydroxy-3-methylpentanoate (2,3-dihydroxy-3-methylvalerate) into 2-oxo-3-methylpentanoate (2-oxo-3-methylvalerate) and of (2R)-2,3-dihydroxy-3-methylbutanoate (2,3-dihydroxyisovalerate) into 2-oxo-3-methylbutanoate (2-oxoisovalerate), the penultimate precursor to L-isoleucine and L-valine, respectively. The polypeptide is Dihydroxy-acid dehydratase (Mycobacterium sp. (strain JLS)).